The primary structure comprises 368 residues: Transcription factor TGA7 (368 aa).

The segment covering 70 to 82 (HNQIEAEQPSSND) has biased composition (polar residues). The segment at 70–89 (HNQIEAEQPSSNDNQDDDGR) is disordered. Positions 91–151 (HDKMKRRLAQ…LGPSGSINTG (61 aa)) constitute a bZIP domain. Coiled coils occupy residues 92 to 142 (DKMK…QGHL) and 252 to 285 (DQQI…SLAE). The tract at residues 93–113 (KMKRRLAQNREAARKSRLRKK) is basic motif. Positions 119–133 (LEESRLKLSQLEQEL) are leucine-zipper. Residues 152–363 (IASFEMEYSH…RALSSLWAAR (212 aa)) form the DOG1 domain.

The protein belongs to the bZIP family. In terms of assembly, binds DNA as a dimer. Interacts with NPR1 and NPR4. Interacts with GRXC7/ROXY1.

It localises to the nucleus. Functionally, transcriptional activator that binds specifically to the DNA sequence 5'-TGACG-3'. Recognizes ocs elements like the as-1 motif of the cauliflower mosaic virus 35S promoter. Binding to the as-1-like cis elements mediate auxin- and salicylic acid-inducible transcription. May be involved in the induction of the systemic acquired resistance (SAR) via its interaction with NPR1. This is Transcription factor TGA7 (TGA7) from Arabidopsis thaliana (Mouse-ear cress).